Here is a 343-residue protein sequence, read N- to C-terminus: D-alanine--D-alanine ligase (343 aa).

The 207-residue stretch at 129 to 335 (KYVLENFGVK…YGELISEIIE (207 aa)) folds into the ATP-grasp domain. 162–217 (ENKLGYDVFIKPSNSGSSVGISKAHNREELEAGLEEALKFDRKVLVEVALNAREIE) is a binding site for ATP. Residues Asp-288, Glu-302, and Asn-304 each coordinate Mg(2+).

Belongs to the D-alanine--D-alanine ligase family. The cofactor is Mg(2+). Mn(2+) serves as cofactor.

The protein resides in the cytoplasm. The enzyme catalyses 2 D-alanine + ATP = D-alanyl-D-alanine + ADP + phosphate + H(+). Its pathway is cell wall biogenesis; peptidoglycan biosynthesis. Cell wall formation. The polypeptide is D-alanine--D-alanine ligase (Clostridium novyi (strain NT)).